We begin with the raw amino-acid sequence, 366 residues long: MLYYLHYYSGYLGILNVFKYITFRAMGAAITSLVLCWLLGRPMISLLRKLKAGQPIRGKEVVKDLAALHGSKSGTPTMGGLLILLAVSLSCLIWVIPTNKFFWLSLLSMLFMGGIGFWDDFKKVIQKKHYGISGKIKLLAQAIVGVVVGIVLLADPETSRLAQKLTIPFLKEVKHIDIGWMAIPFFILVVMGSSNAVNLTDGLDGLAAGCTIGVAFVYAVFSYISGRADMSGYLFLPYIKGAGELTIFCSALIGACMGFLWYNCYPAAVFMGDTGSLAIGSALGVVAIILGQELLLVIAGGIFVIEATSVILQVASFKLTGKRLFAMAPLHHHFELKGWSETAVTVRFWILSLLFGLLALSSLKIR.

10 helical membrane passes run 27–47, 76–96, 101–121, 136–156, 176–196, 205–225, 241–261, 264–284, 285–305, and 343–363; these read GAAI…ISLL, PTMG…IWVI, FFWL…WDDF, IKLL…LADP, IDIG…SSNA, GLAA…SYIS, GAGE…GFLW, CYPA…SALG, VVAI…IFVI, and AVTV…LSSL.

Belongs to the glycosyltransferase 4 family. MraY subfamily. Mg(2+) serves as cofactor.

It is found in the cell inner membrane. It catalyses the reaction UDP-N-acetyl-alpha-D-muramoyl-L-alanyl-gamma-D-glutamyl-meso-2,6-diaminopimeloyl-D-alanyl-D-alanine + di-trans,octa-cis-undecaprenyl phosphate = di-trans,octa-cis-undecaprenyl diphospho-N-acetyl-alpha-D-muramoyl-L-alanyl-D-glutamyl-meso-2,6-diaminopimeloyl-D-alanyl-D-alanine + UMP. It functions in the pathway cell wall biogenesis; peptidoglycan biosynthesis. In terms of biological role, catalyzes the initial step of the lipid cycle reactions in the biosynthesis of the cell wall peptidoglycan: transfers peptidoglycan precursor phospho-MurNAc-pentapeptide from UDP-MurNAc-pentapeptide onto the lipid carrier undecaprenyl phosphate, yielding undecaprenyl-pyrophosphoryl-MurNAc-pentapeptide, known as lipid I. The chain is Phospho-N-acetylmuramoyl-pentapeptide-transferase from Methylacidiphilum infernorum (isolate V4) (Methylokorus infernorum (strain V4)).